The chain runs to 239 residues: SKA complex subunit 1 (239 aa).

Positions P87–G115 are disordered. The microtubule binding stretch occupies residues N116–A239.

The protein belongs to the SKA1 family. In terms of assembly, component of the SKA complex, composed of two copies of ska-1 and a single copy of ska-3. The core complex associates with microtubules and may form dimeric assemblies. Interacts with ska-3 and microtubules.

It is found in the cytoplasm. The protein resides in the cytoskeleton. Its subcellular location is the spindle. The protein localises to the chromosome. It localises to the centromere. It is found in the kinetochore. Its function is as follows. Component of the SKA complex, a microtubule plus end-binding complex of the outer kinetochore that stabilizes spindle microtubule-kinetochore attachments, promotes alignment of chromosomes at the mitotic spindle equator (chromosome congression) and assists suppression of the spindle assembly checkpoint. Kinetochores, consisting of a centromere-associated inner segment and a microtubule-contacting outer segment, play a crucial role in chromosome segregation by mediating the physical connection between centromeric DNA and spindle microtubules. The outer kinetochore is made up of the ten-subunit KMN network complex, comprising the MIS12, NDC80 and KNL1 complexes, and auxiliary microtubule-associated components such as the SKA complex; together they connect the outer kinetochore with the inner kinetochore, bind microtubules, and mediate interactions with mitotic checkpoint proteins that delay anaphase until chromosomes are bioriented on the spindle. The SKA complex is loaded onto bioriented kinetochores and it facilitates chromosome congression by stabilizing microtubules and end-on attachment of the NDC80 complex to depolymerizing spindle microtubules, thereby assisting the poleward-moving kinetochore in withstanding microtubule pulling forces. The complex associates with dynamic microtubule plus-ends and can track both depolymerizing and elongating microtubules. The complex recruits protein phosphatase 1 (PP1) to the kinetochore in prometaphase and metaphase, to oppose spindle assembly checkpoint signaling and promote the onset of anaphase. In the complex, it mediates interactions with microtubules. During meiosis the SKA complex stabilizes the meiotic spindle and is required for its migration to the cortex. The protein is SKA complex subunit 1 of Caenorhabditis briggsae.